The following is a 693-amino-acid chain: Sulfite reductase 1 [ferredoxin], chloroplastic (693 aa).

The N-terminal 62 residues, 1-62, are a transit peptide targeting the chloroplast; that stretch reads MTTSFGAAIN…PSSIVRAVST (62 aa). [4Fe-4S] cluster-binding residues include Cys502, Cys508, Cys548, and Cys552. Cys552 lines the siroheme pocket.

This sequence belongs to the nitrite and sulfite reductase 4Fe-4S domain family. Monomer. Interacts with ferredoxin. Requires siroheme as cofactor. The cofactor is [4Fe-4S] cluster. In terms of processing, phosphorylated; this phosphorylation reduces DNA-binding. Expressed in leaves, stems, roots and petals.

The protein localises to the plastid. It is found in the chloroplast stroma. It localises to the chloroplast nucleoid. Its subcellular location is the plastid stroma. The catalysed reaction is hydrogen sulfide + 6 oxidized [2Fe-2S]-[ferredoxin] + 3 H2O = sulfite + 6 reduced [2Fe-2S]-[ferredoxin] + 7 H(+). In terms of biological role, essential protein with sulfite reductase activity required in assimilatory sulfate reduction pathway during both primary and secondary metabolism and thus involved in development and growth. Its function is as follows. DNA-binding protein that binds to both double-stranded and single-stranded DNA without significant sequence specificity to reversibly repress the transcriptional activity of chloroplast nucleoids by promoting DNA compaction and possibly regulate DNA replication. The chain is Sulfite reductase 1 [ferredoxin], chloroplastic (SIR1) from Nicotiana tabacum (Common tobacco).